Consider the following 261-residue polypeptide: MAVGKNKRISKGKKGGKKKATDPFAKKDWYDIKAPNVFQNKNVGKTLVSRTQGTKIASEGLKHRVFEVCLADLQGDEDQAYRKIRLRAEDVQGKNVLTNFYGMDFTTDKLRSLVRKWQTLIEAHVDVKTTDSYTLRMFCIGFTKKRANQQKRTCYAQSSQIRQIRRKMVEIMRNQASSCDLKELVAKFIPESIGREIEKATSSIFPLQNVFIRKVKILKAPKFDIGKLMEVHGDYSEDVGVKLERPIEETMVEGETEVVGA.

Over residues methionine 1–lysine 18 the composition is skewed to basic residues. A disordered region spans residues methionine 1–threonine 21.

It belongs to the eukaryotic ribosomal protein eS1 family. As to quaternary structure, component of the small ribosomal subunit. Mature ribosomes consist of a small (40S) and a large (60S) subunit. The 40S subunit contains about 33 different proteins and 1 molecule of RNA (18S). The 60S subunit contains about 49 different proteins and 3 molecules of RNA (25S, 5.8S and 5S).

The protein localises to the cytoplasm. This chain is Small ribosomal subunit protein eS1 (cyc07), found in Daucus carota (Wild carrot).